The following is a 251-amino-acid chain: Metallo-beta-lactamase domain-containing protein 1 (251 aa).

The Zn(2+) site is built by His-118, His-120, Asp-122, His-123, His-173, Asp-196, and His-235.

It belongs to the metallo-beta-lactamase superfamily. Glyoxalase II family. As to quaternary structure, homodimer. It depends on Zn(2+) as a cofactor.

It is found in the cytoplasm. The protein resides in the cytosol. Its subcellular location is the nucleus. It carries out the reaction a ribonucleotidyl-ribonucleotide-RNA + H2O = a 3'-end ribonucleotide-RNA + a 5'-end 5'-phospho-ribonucleoside-RNA + H(+). Its function is as follows. Endoribonuclease that catalyzes the hydrolysis of histone-coding pre-mRNA 3'-end. Involved in histone pre-mRNA processing during the S-phase of the cell cycle, which is required for entering/progressing through S-phase. Cleaves histone pre-mRNA at a major and a minor cleavage site after the 5'-ACCCA-3' and the 5'-ACCCACA-3' sequence, respectively, and located downstream of the stem-loop. May require the presence of the HDE element located at the histone pre-RNA 3'-end to avoid non-specific cleavage. The protein is Metallo-beta-lactamase domain-containing protein 1 (Mblac1) of Rattus norvegicus (Rat).